Reading from the N-terminus, the 154-residue chain is Interleukin-2 (154 aa).

The signal sequence occupies residues 1-20 (MYRMQLLSCIALSLALVTNS). The O-linked (GalNAc...) threonine glycan is linked to Thr-23. Cys-78 and Cys-126 are oxidised to a cystine.

Belongs to the IL-2 family.

The protein resides in the secreted. In terms of biological role, cytokine produced by activated CD4-positive helper T-cells and to a lesser extend activated CD8-positive T-cells and natural killer (NK) cells that plays pivotal roles in the immune response and tolerance. Binds to a receptor complex composed of either the high-affinity trimeric IL-2R (IL2RA/CD25, IL2RB/CD122 and IL2RG/CD132) or the low-affinity dimeric IL-2R (IL2RB and IL2RG). Interaction with the receptor leads to oligomerization and conformation changes in the IL-2R subunits resulting in downstream signaling starting with phosphorylation of JAK1 and JAK3. In turn, JAK1 and JAK3 phosphorylate the receptor to form a docking site leading to the phosphorylation of several substrates including STAT5. This process leads to activation of several pathways including STAT, phosphoinositide-3-kinase/PI3K and mitogen-activated protein kinase/MAPK pathways. Functions as a T-cell growth factor and can increase NK-cell cytolytic activity as well. Promotes strong proliferation of activated B-cells and subsequently immunoglobulin production. Plays a pivotal role in regulating the adaptive immune system by controlling the survival and proliferation of regulatory T-cells, which are required for the maintenance of immune tolerance. Moreover, participates in the differentiation and homeostasis of effector T-cell subsets, including Th1, Th2, Th17 as well as memory CD8-positive T-cells. The polypeptide is Interleukin-2 (IL2) (Macaca fascicularis (Crab-eating macaque)).